A 528-amino-acid chain; its full sequence is Bifunctional purine biosynthesis protein PurH (528 aa).

In terms of domain architecture, MGS-like spans 2 to 149 (TDLAPLRRAL…KNHGFVSVVV (148 aa)).

This sequence belongs to the PurH family.

It catalyses the reaction (6R)-10-formyltetrahydrofolate + 5-amino-1-(5-phospho-beta-D-ribosyl)imidazole-4-carboxamide = 5-formamido-1-(5-phospho-D-ribosyl)imidazole-4-carboxamide + (6S)-5,6,7,8-tetrahydrofolate. It carries out the reaction IMP + H2O = 5-formamido-1-(5-phospho-D-ribosyl)imidazole-4-carboxamide. It functions in the pathway purine metabolism; IMP biosynthesis via de novo pathway; 5-formamido-1-(5-phospho-D-ribosyl)imidazole-4-carboxamide from 5-amino-1-(5-phospho-D-ribosyl)imidazole-4-carboxamide (10-formyl THF route): step 1/1. Its pathway is purine metabolism; IMP biosynthesis via de novo pathway; IMP from 5-formamido-1-(5-phospho-D-ribosyl)imidazole-4-carboxamide: step 1/1. The sequence is that of Bifunctional purine biosynthesis protein PurH from Roseobacter denitrificans (strain ATCC 33942 / OCh 114) (Erythrobacter sp. (strain OCh 114)).